A 430-amino-acid chain; its full sequence is UDP-N-acetylglucosamine 1-carboxyvinyltransferase 1 (430 aa).

22–23 (KN) serves as a coordination point for phosphoenolpyruvate. Residue Arg-93 coordinates UDP-N-acetyl-alpha-D-glucosamine. The active-site Proton donor is the Cys-117. Cys-117 is modified (2-(S-cysteinyl)pyruvic acid O-phosphothioketal). Residues 122-126 (RPVDL), Asp-305, and Val-327 each bind UDP-N-acetyl-alpha-D-glucosamine.

The protein belongs to the EPSP synthase family. MurA subfamily.

The protein resides in the cytoplasm. It carries out the reaction phosphoenolpyruvate + UDP-N-acetyl-alpha-D-glucosamine = UDP-N-acetyl-3-O-(1-carboxyvinyl)-alpha-D-glucosamine + phosphate. Its pathway is cell wall biogenesis; peptidoglycan biosynthesis. Cell wall formation. Adds enolpyruvyl to UDP-N-acetylglucosamine. The sequence is that of UDP-N-acetylglucosamine 1-carboxyvinyltransferase 1 from Listeria monocytogenes serovar 1/2a (strain ATCC BAA-679 / EGD-e).